A 104-amino-acid chain; its full sequence is DNA-directed RNA polymerase subunit omega (104 aa).

The tract at residues valine 60–isoleucine 104 is disordered. A compositionally biased stretch (basic and acidic residues) spans proline 63–isoleucine 104.

This sequence belongs to the RNA polymerase subunit omega family. As to quaternary structure, the RNAP catalytic core consists of 2 alpha, 1 beta, 1 beta' and 1 omega subunit. When a sigma factor is associated with the core the holoenzyme is formed, which can initiate transcription.

The catalysed reaction is RNA(n) + a ribonucleoside 5'-triphosphate = RNA(n+1) + diphosphate. Its function is as follows. Promotes RNA polymerase assembly. Latches the N- and C-terminal regions of the beta' subunit thereby facilitating its interaction with the beta and alpha subunits. The polypeptide is DNA-directed RNA polymerase subunit omega (Streptococcus sanguinis (strain SK36)).